Consider the following 85-residue polypeptide: MNYLIVISFALLLMTGVESGRDAYIAKKENCTYFCALNPYCNDLCTKNGAKSGYCQWAGRYGNACWCIDLPDKVPIRIPGPCIGR.

Positions 1–19 are cleaved as a signal peptide; the sequence is MNYLIVISFALLLMTGVES. Residues 21 to 83 enclose the LCN-type CS-alpha/beta domain; it reads RDAYIAKKEN…VPIRIPGPCI (63 aa). 4 disulfide bridges follow: C31-C82, C35-C55, C41-C65, and C45-C67.

The protein belongs to the long (4 C-C) scorpion toxin superfamily. Sodium channel inhibitor family. Alpha subfamily. As to expression, expressed by the venom gland.

It localises to the secreted. Its function is as follows. This protein markedly relaxes the rat carbachol-precontracted anococcygeus muscle. This relaxation is inhibited by the inhibitor of nitric oxide (NO) synthase, N-nitro-L-arginine methyl ester (L-NAME), suggesting that the response induced by this protein is NO-mediated. The polypeptide is Makatoxin-3 (Olivierus martensii (Manchurian scorpion)).